The sequence spans 460 residues: DNA repair protein RAD57 (460 aa).

Residue 125–132 (GESSTGKS) participates in ATP binding.

This sequence belongs to the RecA family.

The protein localises to the nucleus. Its function is as follows. Participates in the repair of X-ray-induced damage to DNA and in meiosis. It may act in part by stabilizing a repair complex of other RAD genes. The protein is DNA repair protein RAD57 (RAD57) of Saccharomyces cerevisiae (strain ATCC 204508 / S288c) (Baker's yeast).